A 496-amino-acid polypeptide reads, in one-letter code: UDP-N-acetylmuramoyl-L-alanyl-D-glutamate--2,6-diaminopimelate ligase (496 aa).

Leu-29 and Ser-31 together coordinate UDP-N-acetyl-alpha-D-muramoyl-L-alanyl-D-glutamate. 118–124 (GTNGKTT) is a binding site for ATP. Residues Asn-159, 160–161 (TT), Ser-187, Gln-193, and Arg-195 contribute to the UDP-N-acetyl-alpha-D-muramoyl-L-alanyl-D-glutamate site. Lys-227 is modified (N6-carboxylysine). Residues Arg-392, 416-419 (DNPR), Gly-467, and Glu-471 contribute to the meso-2,6-diaminopimelate site. Positions 416–419 (DNPR) match the Meso-diaminopimelate recognition motif motif.

It belongs to the MurCDEF family. MurE subfamily. The cofactor is Mg(2+). In terms of processing, carboxylation is probably crucial for Mg(2+) binding and, consequently, for the gamma-phosphate positioning of ATP.

The protein resides in the cytoplasm. The enzyme catalyses UDP-N-acetyl-alpha-D-muramoyl-L-alanyl-D-glutamate + meso-2,6-diaminopimelate + ATP = UDP-N-acetyl-alpha-D-muramoyl-L-alanyl-gamma-D-glutamyl-meso-2,6-diaminopimelate + ADP + phosphate + H(+). It participates in cell wall biogenesis; peptidoglycan biosynthesis. Functionally, catalyzes the addition of meso-diaminopimelic acid to the nucleotide precursor UDP-N-acetylmuramoyl-L-alanyl-D-glutamate (UMAG) in the biosynthesis of bacterial cell-wall peptidoglycan. The protein is UDP-N-acetylmuramoyl-L-alanyl-D-glutamate--2,6-diaminopimelate ligase of Wigglesworthia glossinidia brevipalpis.